The primary structure comprises 496 residues: Sugar transporter ERD6 (496 aa).

6 consecutive transmembrane segments (helical) span residues Val58 to Phe78, Val94 to Phe114, Met128 to Ala148, Leu156 to Ile176, Gly183 to Ile203, and Leu211 to Pro231. At Ser256 the chain carries Phosphoserine. The next 6 membrane-spanning stretches (helical) occupy residues Tyr292 to Val312, Ile329 to Val349, Ala364 to Leu384, Ile394 to Ile414, Leu430 to Leu450, and Gly456 to Val476.

Belongs to the major facilitator superfamily. Sugar transporter (TC 2.A.1.1) family. In terms of tissue distribution, expressed in both shoots and roots. In roots, expressed in epidermal cells and especially strongly in cortex cells. In flowers, expressed in sepals.

The protein localises to the membrane. Sugar transporter. This chain is Sugar transporter ERD6 (ERD6), found in Arabidopsis thaliana (Mouse-ear cress).